Here is a 372-residue protein sequence, read N- to C-terminus: N-methyl-L-tryptophan oxidase (372 aa).

An FAD-binding site is contributed by 4-34 (DLIIIGSGSVGAAAGYYATRAGLNVLMTDAH). An S-8alpha-FAD cysteine modification is found at cysteine 308.

The protein belongs to the MSOX/MTOX family. MTOX subfamily. In terms of assembly, monomer. FAD is required as a cofactor.

It catalyses the reaction N(alpha)-methyl-L-tryptophan + O2 + H2O = L-tryptophan + formaldehyde + H2O2. Catalyzes the oxidative demethylation of N-methyl-L-tryptophan. This is N-methyl-L-tryptophan oxidase from Escherichia coli (strain K12 / DH10B).